The chain runs to 418 residues: Calreticulin (418 aa).

Residues 1–17 (MLLPVPLLLGLLGLAAA) form the signal peptide. The N-domain stretch occupies residues 18-197 (EPVVYFKEQF…NSQVESGSLE (180 aa)). Position 26 (Q26) interacts with Ca(2+). K48 carries the post-translational modification N6-acetyllysine. Ca(2+) contacts are provided by K62 and K64. At K64 the chain carries N6-(2-hydroxyisobutyryl)lysine. C105 and C137 are disulfide-bonded. The an alpha-D-glucoside site is built by Y109, K111, Y128, and D135. K159 carries the post-translational modification N6-acetyllysine. The stretch at 191-202 (VESGSLEDDWDF) is one 1-1 repeat. The interval 191 to 255 (VESGSLEDDW…DAKKPEDWDE (65 aa)) is 4 X approximate repeats. The segment at 193–277 (SGSLEDDWDF…NPEYKGEWKP (85 aa)) is disordered. Positions 198-308 (DDWDFLPPKK…YSPDANIYAY (111 aa)) are P-domain. Positions 207-251 (KIKDPDASKPEDWDERAKIDDPTDSKPEDWDKPEHIPDPDAKKPE) are enriched in basic and acidic residues. K209 bears the N6-acetyllysine mark. 6 repeat units span residues 210–221 (DPDASKPEDWDE), 227–238 (DPTDSKPEDWDK), 244–255 (DPDAKKPEDWDE), 259–269 (GEWEPPVIQNP), 273–283 (GEWKPRQIDNP), and 287–297 (GTWIHPEIDNP). The interval 237 to 270 (DKPEHIPDPDAKKPEDWDEEMDGEWEPPVIQNPE) is interaction with PPIB. Residues 252-261 (DWDEEMDGEW) show a composition bias toward acidic residues. A 3 X approximate repeats region spans residues 259-297 (GEWEPPVIQNPEYKGEWKPRQIDNPDYKGTWIHPEIDNP). Positions 309–418 (DSFAVLGLDL…AAAGQAKDEL (110 aa)) are C-domain. Position 317 (D317) interacts with an alpha-D-glucoside. D328 contacts Ca(2+). The segment at 349–418 (VTKTAEKQMK…AAAGQAKDEL (70 aa)) is disordered. Over residues 352–379 (TAEKQMKDKQDEEQRLKEEEEEKKRKEE) the composition is skewed to basic and acidic residues. The span at 380–409 (EEAEEDEEDKDDKEDEDEDEEDKDEEEEEA) shows a compositional bias: acidic residues. The short motif at 415-418 (KDEL) is the Prevents secretion from ER element.

Belongs to the calreticulin family. Monomer. Component of an EIF2 complex at least composed of CELF1/CUGBP1, CALR, CALR3, EIF2S1, EIF2S2, HSP90B1 and HSPA5. Interacts with PDIA3/ERp57 and SPACA9. Interacts with TRIM21. Interacts with NR3C1. Interacts with PPIB. Interacts (via P-domain) with PDIA5. Interacts with CLCC1.

It localises to the endoplasmic reticulum lumen. The protein localises to the cytoplasm. It is found in the cytosol. Its subcellular location is the secreted. The protein resides in the extracellular space. It localises to the extracellular matrix. The protein localises to the cell surface. It is found in the sarcoplasmic reticulum lumen. Its subcellular location is the cytoplasmic vesicle. The protein resides in the secretory vesicle. It localises to the cortical granule. The protein localises to the cytolytic granule. Calcium-binding chaperone that promotes folding, oligomeric assembly and quality control in the endoplasmic reticulum (ER) via the calreticulin/calnexin cycle. This lectin interacts transiently with almost all of the monoglucosylated glycoproteins that are synthesized in the ER. Interacts with the DNA-binding domain of NR3C1 and mediates its nuclear export. Involved in maternal gene expression regulation. May participate in oocyte maturation via the regulation of calcium homeostasis. Present in the cortical granules of non-activated oocytes, is exocytosed during the cortical reaction in response to oocyte activation and might participate in the block to polyspermy. The sequence is that of Calreticulin (CALR) from Oryctolagus cuniculus (Rabbit).